Reading from the N-terminus, the 232-residue chain is Ubiquinone biosynthesis O-methyltransferase (232 aa).

Positions 36, 55, 76, and 120 each coordinate S-adenosyl-L-methionine.

This sequence belongs to the methyltransferase superfamily. UbiG/COQ3 family.

The catalysed reaction is a 3-demethylubiquinol + S-adenosyl-L-methionine = a ubiquinol + S-adenosyl-L-homocysteine + H(+). The enzyme catalyses a 3-(all-trans-polyprenyl)benzene-1,2-diol + S-adenosyl-L-methionine = a 2-methoxy-6-(all-trans-polyprenyl)phenol + S-adenosyl-L-homocysteine + H(+). It functions in the pathway cofactor biosynthesis; ubiquinone biosynthesis. O-methyltransferase that catalyzes the 2 O-methylation steps in the ubiquinone biosynthetic pathway. This is Ubiquinone biosynthesis O-methyltransferase from Pseudomonas paraeruginosa (strain DSM 24068 / PA7) (Pseudomonas aeruginosa (strain PA7)).